The sequence spans 150 residues: 1,4-dihydroxy-2-naphthoyl-CoA hydrolase (150 aa).

Residue D19 is part of the active site.

This sequence belongs to the 4-hydroxybenzoyl-CoA thioesterase family. DHNA-CoA hydrolase subfamily.

It catalyses the reaction 1,4-dihydroxy-2-naphthoyl-CoA + H2O = 1,4-dihydroxy-2-naphthoate + CoA + H(+). Its pathway is cofactor biosynthesis; phylloquinone biosynthesis. It participates in quinol/quinone metabolism; 1,4-dihydroxy-2-naphthoate biosynthesis; 1,4-dihydroxy-2-naphthoate from chorismate: step 7/7. Catalyzes the hydrolysis of 1,4-dihydroxy-2-naphthoyl-CoA (DHNA-CoA) to 1,4-dihydroxy-2-naphthoate (DHNA), a reaction involved in phylloquinone (vitamin K1) biosynthesis. The chain is 1,4-dihydroxy-2-naphthoyl-CoA hydrolase from Prochlorococcus marinus subsp. pastoris (strain CCMP1986 / NIES-2087 / MED4).